A 169-amino-acid chain; its full sequence is MPLLDSFTVDHTRMNAPAVRVAKHMSTPKGDAITVFDLRFCAPNKDILSERGIHTLEHLFAGFMRDHLNGSDVEIIDISPMGCRTGFYMSLIGEPSERQVADAWLASMEDVLKVVEQSEIPELNEYQCGTYEMHSLEQAQDIARNIIAAGVSVNRNDDLKLSDEILGQL.

His54, His58, and Cys128 together coordinate Fe cation.

Belongs to the LuxS family. As to quaternary structure, homodimer. Fe cation serves as cofactor.

The catalysed reaction is S-(5-deoxy-D-ribos-5-yl)-L-homocysteine = (S)-4,5-dihydroxypentane-2,3-dione + L-homocysteine. Its function is as follows. Involved in the synthesis of autoinducer 2 (AI-2) which is secreted by bacteria and is used to communicate both the cell density and the metabolic potential of the environment. The regulation of gene expression in response to changes in cell density is called quorum sensing. Catalyzes the transformation of S-ribosylhomocysteine (RHC) to homocysteine (HC) and 4,5-dihydroxy-2,3-pentadione (DPD). The polypeptide is S-ribosylhomocysteine lyase (Shewanella sp. (strain ANA-3)).